The sequence spans 517 residues: Protein MGF 505-2R (517 aa).

Belongs to the asfivirus MGF 505 family.

Functionally, plays a role in virus cell tropism, and may be required for efficient virus replication in macrophages. This chain is Protein MGF 505-2R, found in African swine fever virus (isolate Warthog/Namibia/Wart80/1980) (ASFV).